Consider the following 185-residue polypeptide: Large ribosomal subunit protein uL22 (185 aa).

Belongs to the universal ribosomal protein uL22 family. In terms of assembly, part of the 50S ribosomal subunit.

Its function is as follows. This protein binds specifically to 23S rRNA. It makes multiple contacts with different domains of the 23S rRNA in the assembled 50S subunit and ribosome. Functionally, the globular domain of the protein is located near the polypeptide exit tunnel on the outside of the subunit, while an extended beta-hairpin is found that lines the wall of the exit tunnel in the center of the 70S ribosome. The polypeptide is Large ribosomal subunit protein uL22 (Pyrobaculum islandicum (strain DSM 4184 / JCM 9189 / GEO3)).